The following is a 141-amino-acid chain: ATP synthase epsilon chain (141 aa).

Belongs to the ATPase epsilon chain family. In terms of assembly, F-type ATPases have 2 components, CF(1) - the catalytic core - and CF(0) - the membrane proton channel. CF(1) has five subunits: alpha(3), beta(3), gamma(1), delta(1), epsilon(1). CF(0) has three main subunits: a, b and c.

It is found in the cell inner membrane. Functionally, produces ATP from ADP in the presence of a proton gradient across the membrane. The chain is ATP synthase epsilon chain from Chromohalobacter salexigens (strain ATCC BAA-138 / DSM 3043 / CIP 106854 / NCIMB 13768 / 1H11).